The sequence spans 122 residues: uncharacterized protein (122 aa).

A compositionally biased stretch (basic and acidic residues) spans 1–15; it reads MAEPGGRGDYHKDGR. A disordered region spans residues 1–26; sequence MAEPGGRGDYHKDGRPPSLSRSPLFT.

This is an uncharacterized protein from Macaca fascicularis (Crab-eating macaque).